A 77-amino-acid polypeptide reads, in one-letter code: Acyl carrier protein (77 aa).

The 76-residue stretch at 1–76 (MSVEQRVKEI…DVLDYIKSKQ (76 aa)) folds into the Carrier domain. Ser36 is modified (O-(pantetheine 4'-phosphoryl)serine).

This sequence belongs to the acyl carrier protein (ACP) family. Post-translationally, 4'-phosphopantetheine is transferred from CoA to a specific serine of apo-ACP by AcpS. This modification is essential for activity because fatty acids are bound in thioester linkage to the sulfhydryl of the prosthetic group.

It is found in the cytoplasm. The protein operates within lipid metabolism; fatty acid biosynthesis. In terms of biological role, carrier of the growing fatty acid chain in fatty acid biosynthesis. The sequence is that of Acyl carrier protein from Sulfurihydrogenibium sp. (strain YO3AOP1).